A 336-amino-acid chain; its full sequence is Tryptophan--tRNA ligase 1 (336 aa).

ATP contacts are provided by residues 9–11 (KPT) and 17–18 (GN). The short motif at 10-18 (PTGHLTLGN) is the 'HIGH' region element. Residue Asp137 coordinates L-tryptophan. Residues 149 to 151 (GED), Val188, and 197 to 201 (KMGKS) each bind ATP. The 'KMSKS' region motif lies at 197 to 201 (KMGKS).

The protein belongs to the class-I aminoacyl-tRNA synthetase family. As to quaternary structure, homodimer.

It is found in the cytoplasm. The enzyme catalyses tRNA(Trp) + L-tryptophan + ATP = L-tryptophyl-tRNA(Trp) + AMP + diphosphate + H(+). In terms of biological role, catalyzes the attachment of tryptophan to tRNA(Trp). The polypeptide is Tryptophan--tRNA ligase 1 (Streptomyces coelicolor (strain ATCC BAA-471 / A3(2) / M145)).